The sequence spans 264 residues: Glutamate racemase (264 aa).

Substrate-binding positions include 10 to 11 (DS) and 42 to 43 (YG). Catalysis depends on Cys-73, which acts as the Proton donor/acceptor. 74–75 (NT) provides a ligand contact to substrate. Cys-183 functions as the Proton donor/acceptor in the catalytic mechanism. 184-185 (TH) contributes to the substrate binding site.

Belongs to the aspartate/glutamate racemases family. In terms of assembly, homodimer.

It catalyses the reaction L-glutamate = D-glutamate. It participates in cell wall biogenesis; peptidoglycan biosynthesis. Provides the (R)-glutamate required for cell wall biosynthesis. This is Glutamate racemase from Streptococcus pyogenes serotype M1.